The following is a 78-amino-acid chain: MSRVCQVTGKRPVTGNNVSHAMNHTRRRFLPNLQNHRFWVESEKRFVKLRVSTKGMRIIDKKGIDAVLADLRARGEKV.

Belongs to the bacterial ribosomal protein bL28 family.

In Marinobacter nauticus (strain ATCC 700491 / DSM 11845 / VT8) (Marinobacter aquaeolei), this protein is Large ribosomal subunit protein bL28.